Consider the following 552-residue polypeptide: AP-1-like transcription factor (552 aa).

The span at 1–14 (MSGQTETLSSTSNI) shows a compositional bias: polar residues. The interval 1 to 99 (MSGQTETLSS…QRAFRKRKED (99 aa)) is disordered. The segment covering 36 to 47 (PVSDRSSRRTSS) has biased composition (basic and acidic residues). Residues 48–61 (EEVDLMPNVDDEVD) are compositionally biased toward acidic residues. Basic and acidic residues predominate over residues 62-80 (GDVKPKKIGRKNSDQEPSS). A bZIP domain is found at 76–139 (QEPSSKRKAQ…RQLEEELRIL (64 aa)). The Nuclear localization signal motif lies at 81-88 (KRKAQNRA). Residues 81–102 (KRKAQNRAAQRAFRKRKEDHLK) form a basic motif region. Residues 104–111 (LETQVVTL) form a leucine-zipper region. The segment at 213-244 (QVPPTLVDSNSAQGTLSPETPSSSDSPSNLYL) is disordered. The segment covering 219-228 (VDSNSAQGTL) has biased composition (polar residues). The segment covering 229-240 (SPETPSSSDSPS) has biased composition (low complexity). A n-CRD region spans residues 259–290 (CSALSNGENGEDVADGKQFCQKLSTACGSIAC). 2 cysteine pairs are disulfide-bonded: Cys-278-Cys-501 and Cys-285-Cys-532. Positions 460-489 (ISNHPDEVPPDGLPQKGKHDTSSQMPSENE) are disordered. Positions 501–532 (CPKVWSKIINHPRFESFDIDDLCSKLKNKAKC) are c-CRD. Positions 515–533 (ESFDIDDLCSKLKNKAKCS) match the Nuclear export signal motif.

This sequence belongs to the bZIP family. YAP subfamily. As to quaternary structure, homodimer. The reduced form of pap1 interacts in the nucleus with the nuclear export protein crm1, and in the cytoplasm with the peroxiredoxin tpx1. Post-translationally, depending on the oxidative stress inducing agent, pap1 can undergo two distinct conformational changes, both masking the nuclear export signal, thus abolishing nuclear export by crm1/exportin 1. The glutathione-depleting agent diethylmaleate (DEM) leads to the non-reversible modification of at least 2 cysteine residues in the c-CRD. Peroxide stress induces the formation of a tpx1-dependent interdomain disulfide bond between Cys-278 and Cys-501.

It is found in the nucleus. The protein resides in the cytoplasm. In terms of biological role, transcription activator involved in multidrug resistance, oxidative stress response, and redox homeostasis. Regulates the transcription of genes encoding antioxidant enzymes like catalase ctt1 and components of the cellular thiol-reducing pathways, including the thioredoxin system (trx2, trr1), ABC transporters involved in multidrug resistance like bfr1/hba2 and pmd1 as well as the gene obr1/apt1. Preferentially binds to promoters with the core binding site 5'-TTA[CG]TAA-3'. Activity of the transcription factor is controlled through oxidation of specific cysteine residues resulting in the alteration of its subcellular location. Oxidative stress induces nuclear accumulation and as a result pap1 transcriptional activity. Required for sty1/spc1-conferred staurosporine resistance. The protein is AP-1-like transcription factor (pap1) of Schizosaccharomyces pombe (strain 972 / ATCC 24843) (Fission yeast).